A 166-amino-acid chain; its full sequence is 6,7-dimethyl-8-ribityllumazine synthase (166 aa).

5-amino-6-(D-ribitylamino)uracil contacts are provided by residues phenylalanine 22, 56–58, and 80–82; these read SME and AVI. 85-86 is a binding site for (2S)-2-hydroxy-3-oxobutyl phosphate; sequence ET. The active-site Proton donor is the histidine 88. A 5-amino-6-(D-ribitylamino)uracil-binding site is contributed by phenylalanine 113. (2S)-2-hydroxy-3-oxobutyl phosphate is bound at residue arginine 127.

It belongs to the DMRL synthase family.

The enzyme catalyses (2S)-2-hydroxy-3-oxobutyl phosphate + 5-amino-6-(D-ribitylamino)uracil = 6,7-dimethyl-8-(1-D-ribityl)lumazine + phosphate + 2 H2O + H(+). It functions in the pathway cofactor biosynthesis; riboflavin biosynthesis; riboflavin from 2-hydroxy-3-oxobutyl phosphate and 5-amino-6-(D-ribitylamino)uracil: step 1/2. In terms of biological role, catalyzes the formation of 6,7-dimethyl-8-ribityllumazine by condensation of 5-amino-6-(D-ribitylamino)uracil with 3,4-dihydroxy-2-butanone 4-phosphate. This is the penultimate step in the biosynthesis of riboflavin. This is 6,7-dimethyl-8-ribityllumazine synthase from Thermotoga neapolitana (strain ATCC 49049 / DSM 4359 / NBRC 107923 / NS-E).